We begin with the raw amino-acid sequence, 64 residues long: Leader peptide SpeFL (64 aa).

Positions 32 to 38 match the Ornithine recognition loop motif; that stretch reads HIRRTRH. R35 contributes to the L-ornithine binding site.

The protein belongs to the speF operon leader peptide family. As to quaternary structure, binds ornithine in stalled 70S ribosomes, blocking the upper two-thirds of the exit tunnel. Contacts 23S rRNA and ribosomal proteins L4 and L22.

A small protein (arrest peptide) encoded upstream of inducible ornithine carboxylase gene (speF) that controls expression of downstream genes (usually speF and potE) by transcriptional and translational attenuation. The sequence is that of Leader peptide SpeFL from Haemophilus influenzae (strain ATCC 51907 / DSM 11121 / KW20 / Rd).